A 120-amino-acid chain; its full sequence is Autophagy-related protein 8d (120 aa).

Residue Gly-117 is the site of Phosphatidylethanolamine amidated glycine attachment. Positions 118-120 (IFF) are cleaved as a propeptide — removed in mature form.

The protein belongs to the ATG8 family. Interacts with ATG4B. Interacts with NBR1. Post-translationally, the C-terminal 3 residues are removed by ATG4 to expose Gly-117 at the C-terminus. This Gly-117 forms then a thioester bond with the 'Cys-558' of ATG7 (E1-like activating enzyme) before being transferred to the 'Cys-258' of ATG3 (the specific E2 conjugating enzyme), in order to be finally amidated with phosphatidylethanolamine. This lipid modification anchors ATG8 to autophagosomes. As to expression, constitutively expressed.

The protein localises to the cytoplasmic vesicle. It localises to the autophagosome membrane. The protein resides in the vacuole membrane. It is found in the cytoplasm. Its subcellular location is the cytoskeleton. In terms of biological role, ubiquitin-like modifier involved in autophagosomes formation. May mediate the delivery of the autophagosomes to the vacuole via the microtubule cytoskeleton. The protein is Autophagy-related protein 8d (ATG8D) of Arabidopsis thaliana (Mouse-ear cress).